A 200-amino-acid polypeptide reads, in one-letter code: Inner membrane-spanning protein YciB (200 aa).

The next 6 membrane-spanning stretches (helical) occupy residues 1–21, 37–57, 66–86, 103–123, 136–156, and 167–187; these read MPPL…FFAN, IGAP…IALA, LAIM…LTLW, LFGG…GYVF, KLTL…EIVW, and FKVW…MPLI.

Belongs to the YciB family.

It localises to the cell inner membrane. Its function is as follows. Plays a role in cell envelope biogenesis, maintenance of cell envelope integrity and membrane homeostasis. The chain is Inner membrane-spanning protein YciB from Brucella melitensis biotype 1 (strain ATCC 23456 / CCUG 17765 / NCTC 10094 / 16M).